A 419-amino-acid polypeptide reads, in one-letter code: Putative competence-damage inducible protein (419 aa).

It belongs to the CinA family.

This is Putative competence-damage inducible protein from Streptococcus agalactiae serotype III (strain NEM316).